The primary structure comprises 110 residues: Insulin (110 aa).

An N-terminal signal peptide occupies residues 1 to 24 (MAPWTRLLPLLALLSLWIPAPTRA). Cystine bridges form between C31–C96, C43–C109, and C95–C100. The propeptide at 57–87 (EAEDLQGKDAELGEAPGAGGLQPSALEAPLQ) is c peptide. The segment at 60 to 80 (DLQGKDAELGEAPGAGGLQPS) is disordered.

The protein belongs to the insulin family. Heterodimer of a B chain and an A chain linked by two disulfide bonds.

Its subcellular location is the secreted. Functionally, insulin decreases blood glucose concentration. It increases cell permeability to monosaccharides, amino acids and fatty acids. It accelerates glycolysis, the pentose phosphate cycle, and glycogen synthesis in liver. The chain is Insulin (INS) from Felis catus (Cat).